Consider the following 350-residue polypeptide: CMP-N-acetylneuraminate-beta-galactosamide-alpha-2,3-sialyltransferase 2 (350 aa).

Topologically, residues 1 to 6 (MKCSLR) are cytoplasmic. The helical; Signal-anchor for type II membrane protein transmembrane segment at 7–27 (VWFLSMAFLLVFIMSLLFTYS) threads the bilayer. Residues 28–350 (HHSMATLPYL…ASKIEVYRGN (323 aa)) lie on the Lumenal side of the membrane. Cystine bridges form between cysteine 70–cysteine 75, cysteine 72–cysteine 149, and cysteine 152–cysteine 291. Residues glutamine 116, asparagine 157, and asparagine 180 each contribute to the substrate site. Asparagine 211 carries an N-linked (GlcNAc...) asparagine glycan. Tyrosine 240, tyrosine 276, glycine 280, glycine 300, histidine 309, and histidine 326 together coordinate substrate.

This sequence belongs to the glycosyltransferase 29 family. In terms of assembly, homodimer; disulfide-linked. Homodimer formation occurs in the endoplasmic reticulum. The soluble form derives from the membrane form by proteolytic processing. Post-translationally, N-glycosylated; necessary for proper exit from endoplasmic reticulum and trafficking to the Golgi apparatus.

The protein localises to the golgi apparatus. Its subcellular location is the golgi stack membrane. It is found in the secreted. It catalyses the reaction a beta-D-galactosyl-(1-&gt;3)-N-acetyl-alpha-D-galactosaminyl derivative + CMP-N-acetyl-beta-neuraminate = an N-acetyl-alpha-neuraminyl-(2-&gt;3)-beta-D-galactosyl-(1-&gt;3)-N-acetyl-alpha-D-galactosaminyl derivative + CMP + H(+). It carries out the reaction a ganglioside GM1 (d18:1(4E)) + CMP-N-acetyl-beta-neuraminate = a ganglioside GD1a (d18:1(4E)) + CMP + H(+). The enzyme catalyses ganglioside GM1 (d18:1(4E)/18:0) + CMP-N-acetyl-beta-neuraminate = ganglioside GD1a (18:1(4E)/18:0) + CMP + H(+). The catalysed reaction is a ganglioside GA1 + CMP-N-acetyl-beta-neuraminate = a ganglioside GM1b + CMP + H(+). It catalyses the reaction a ganglioside GA1 (d18:1(4E)) + CMP-N-acetyl-beta-neuraminate = a ganglioside GM1b (d18:1(4E)) + CMP + H(+). It carries out the reaction a globoside GalGb4Cer + CMP-N-acetyl-beta-neuraminate = a globoside MSGG + CMP + H(+). Its pathway is protein modification; protein glycosylation. It functions in the pathway glycolipid biosynthesis. A beta-galactoside alpha2-3 sialyltransferase primarily involved in terminal sialylation of ganglio and globo series glycolipids. Catalyzes the transfer of sialic acid (N-acetyl-neuraminic acid; Neu5Ac) from the nucleotide sugar donor CMP-Neu5Ac onto acceptor Galbeta-(1-&gt;3)-GalNAc-terminated glycoconjugates through an alpha2-3 linkage. Sialylates GM1/GM1a, GA1/asialo-GM1 gangliosides to form GD1a and GM1b, respectively. Together with ST3GAL3, primarily responsible for biosynthesis of brain gangliosides that function as ligand for myelin-associated glycoprotein MAG on axons, regulating MAG expression and axonal myelin stability and regeneration. Responsible for the sialylation of the pluripotent stem cell- and cancer stem cell-associated antigen SSEA3, forming SSEA4. Sialylates with low efficiency asialofetuin, presumably onto O-glycosidically linked Galbeta-(1-&gt;3)-GalNAc-O-Ser. The chain is CMP-N-acetylneuraminate-beta-galactosamide-alpha-2,3-sialyltransferase 2 (St3gal2) from Rattus norvegicus (Rat).